We begin with the raw amino-acid sequence, 570 residues long: Probable D-xylulose kinase A (570 aa).

H95, R166, D282, and N283 together coordinate substrate. Residues W364, 469 to 470 (GG), and N473 contribute to the ATP site.

The protein belongs to the FGGY kinase family.

The protein resides in the cytoplasm. It catalyses the reaction D-xylulose + ATP = D-xylulose 5-phosphate + ADP + H(+). In terms of biological role, highly specific D-xylulose kinase which participates in the catabolism of xylose. Xylose is a major component of hemicelluloses such as xylan. Most fungi utilize D-xylose via three enzymatic reactions, xylose reductase (XR), xylitol dehydrogenase (XDH), and xylulokinase, to form xylulose 5-phosphate, which enters pentose phosphate pathway. The polypeptide is Probable D-xylulose kinase A (xkiA) (Aspergillus niger (strain ATCC MYA-4892 / CBS 513.88 / FGSC A1513)).